The following is a 483-amino-acid chain: FAD-linked oxidoreductase easE (483 aa).

Residues glutamine 10–aspartate 193 form the FAD-binding PCMH-type domain.

Belongs to the oxygen-dependent FAD-linked oxidoreductase family. FAD is required as a cofactor.

The protein operates within alkaloid biosynthesis; ergot alkaloid biosynthesis. FAD-linked oxidoreductase; part of the gene cluster that mediates the biosynthesis of fungal ergot alkaloid. DmaW catalyzes the first step of ergot alkaloid biosynthesis by condensing dimethylallyl diphosphate (DMAP) and tryptophan to form 4-dimethylallyl-L-tryptophan. The second step is catalyzed by the methyltransferase easF that methylates 4-dimethylallyl-L-tryptophan in the presence of S-adenosyl-L-methionine, resulting in the formation of 4-dimethylallyl-L-abrine. The catalase easC and the FAD-dependent oxidoreductase easE then transform 4-dimethylallyl-L-abrine to chanoclavine-I which is further oxidized by easD in the presence of NAD(+), resulting in the formation of chanoclavine-I aldehyde. Agroclavine dehydrogenase easG then mediates the conversion of chanoclavine-I aldehyde to agroclavine via a non-enzymatic adduct reaction: the substrate is an iminium intermediate that is formed spontaneously from chanoclavine-I aldehyde in the presence of glutathione. The presence of easA is not required to complete this reaction. Further conversion of agroclavine to paspalic acid is a two-step process involving oxidation of agroclavine to elymoclavine and of elymoclavine to paspalic acid, the second step being performed by the elymoclavine oxidase cloA. Paspalic acid is then further converted to D-lysergic acid. Ergopeptines are assembled from D-lysergic acid and three different amino acids by the D-lysergyl-peptide-synthetases composed each of a monomudular and a trimodular nonribosomal peptide synthetase subunit. LpsB and lpsC encode the monomodular subunits responsible for D-lysergic acid activation and incorporation into the ergopeptine backbone. LpsA1 and A2 subunits encode the trimodular nonribosomal peptide synthetase assembling the tripeptide portion of ergopeptines. LpsA1 is responsible for formation of the major ergopeptine, ergotamine, and lpsA2 for alpha-ergocryptine, the minor ergopeptine of the total alkaloid mixture elaborated by C.purpurea. D-lysergyl-tripeptides are assembled by the nonribosomal peptide synthetases and released as N-(D-lysergyl-aminoacyl)-lactams. Cyclolization of the D-lysergyl-tripeptides is performed by the Fe(2+)/2-ketoglutarate-dependent dioxygenase easH which introduces a hydroxyl group into N-(D-lysergyl-aminoacyl)-lactam at alpha-C of the aminoacyl residue followed by spontaneous condensation with the terminal lactam carbonyl group. In Claviceps purpurea (Ergot fungus), this protein is FAD-linked oxidoreductase easE.